A 250-amino-acid chain; its full sequence is Urease accessory protein UreF (250 aa).

Residues 1-21 (MDEADPGEAEAAQAEAAQDGA) form a disordered region. Residues 9 to 21 (AEAAQAEAAQDGA) are compositionally biased toward low complexity.

Belongs to the UreF family. As to quaternary structure, ureD, UreF and UreG form a complex that acts as a GTP-hydrolysis-dependent molecular chaperone, activating the urease apoprotein by helping to assemble the nickel containing metallocenter of UreC. The UreE protein probably delivers the nickel.

Its subcellular location is the cytoplasm. Its function is as follows. Required for maturation of urease via the functional incorporation of the urease nickel metallocenter. The chain is Urease accessory protein UreF from Methylobacterium sp. (strain 4-46).